Consider the following 247-residue polypeptide: ATP synthase subunit a, chloroplastic (247 aa).

The next 5 membrane-spanning stretches (helical) occupy residues 38–58 (QVLITSWVVITILLGSVVIAV), 95–115 (VPFIGTMFLFIFVSNWSGALL), 134–154 (INTTVALALLTSAAYFYAGLS), 199–219 (LVVVVLVSLVPLVVPIPVMFL), and 220–240 (GLFTSGIQALIFATLAAAYIG).

It belongs to the ATPase A chain family. F-type ATPases have 2 components, CF(1) - the catalytic core - and CF(0) - the membrane proton channel. CF(1) has five subunits: alpha(3), beta(3), gamma(1), delta(1), epsilon(1). CF(0) has four main subunits: a, b, b' and c.

The protein resides in the plastid. It is found in the chloroplast thylakoid membrane. Key component of the proton channel; it plays a direct role in the translocation of protons across the membrane. This chain is ATP synthase subunit a, chloroplastic, found in Lolium perenne (Perennial ryegrass).